Reading from the N-terminus, the 228-residue chain is Max-interacting protein 1 (228 aa).

2 disordered regions span residues 30–76 and 160–228; these read YASS…NELE and SIGS…SFAS. Residues 43–56 show a composition bias toward basic residues; sequence QHSKPPRRLSRAQK. Residues 57 to 70 are compositionally biased toward polar residues; sequence HSSGSSNTSTANRS. The bHLH domain maps to 67-119; sequence ANRSTHNELEKNRRAHLRLCLERLKVLIPLGPDCTRHTTLGLLNKAKAHIKKL. The segment covering 173–183 has biased composition (acidic residues); sequence EREEIEVDVES. The span at 207 to 228 shows a compositional bias: polar residues; the sequence is SLQSVGSDEGYSSASVKLSFAS.

Efficient DNA binding requires dimerization with another bHLH protein. Binds DNA as a heterodimer with MAX. Interacts with SMC3. Interacts with RNF17.

The protein localises to the nucleus. Functionally, transcriptional repressor. MXI1 binds with MAX to form a sequence-specific DNA-binding protein complex which recognizes the core sequence 5'-CAC[GA]TG-3'. MXI1 thus antagonizes MYC transcriptional activity by competing for MAX. Isoform Short, which lacks a segment, has a much stronger suppressive potential and associates with a SIN3 homologous protein. This chain is Max-interacting protein 1 (Mxi1), found in Mus musculus (Mouse).